The primary structure comprises 133 residues: MLFGTYEHCMDAKQRLTLPAKLRNKLSNPIYLTKGYDADLEIWSKDDFLLKIKEILNQQNDQKDIRNIERIIWSNTVEIDIDNLGRIKIPYNLIQNLNIGKDVFILGLGNRLEIWSKNKYNQHKNQFIKNLNS.

SpoVT-AbrB domains are found at residues 5 to 47 (TYEH…SKDD) and 76 to 119 (TVEI…SKNK).

This sequence belongs to the MraZ family. In terms of assembly, forms oligomers.

The protein localises to the cytoplasm. It localises to the nucleoid. The chain is Transcriptional regulator MraZ from Mycoplasma mycoides subsp. mycoides SC (strain CCUG 32753 / NCTC 10114 / PG1).